Here is a 967-residue protein sequence, read N- to C-terminus: A disintegrin and metalloproteinase with thrombospondin motifs 1 (967 aa).

Residues Met1 to Gly54 form the signal peptide. The propeptide occupies Arg55–Arg252. The disordered stretch occupies residues Arg198–Arg252. A Cysteine switch motif is present at residues Ala203 to Glu210. Position 205 (Cys205) interacts with Zn(2+). The segment covering Leu213 to Asp227 has biased composition (polar residues). In terms of domain architecture, Peptidase M12B spans Arg258–Pro467. Positions 261, 344, and 351 each coordinate Ca(2+). Disulfide bonds link Cys333-Cys385, Cys362-Cys367, Cys379-Cys462, and Cys417-Cys446. His401 lines the Zn(2+) pocket. Residue Glu402 is part of the active site. Residues His405 and His411 each coordinate Zn(2+). Positions 462 and 465 each coordinate Ca(2+). A Disintegrin domain is found at Asp476–Val558. Cystine bridges form between Cys488–Cys511, Cys499–Cys521, Cys506–Cys540, and Cys534–Cys545. N-linked (GlcNAc...) asparagine glycosylation is present at Asn547. In terms of domain architecture, TSP type-1 1 spans His559–Pro614. Disulfide bonds link Cys571-Cys608, Cys575-Cys613, and Cys586-Cys598. Residues Asn720, Asn764, and Asn782 are each glycosylated (N-linked (GlcNAc...) asparagine). The interval Lys725–Glu857 is spacer. 2 TSP type-1 domains span residues Thr854–Pro910 and Arg911–Ser967. An N-linked (GlcNAc...) asparagine glycan is attached at Asn945.

The cofactor is Zn(2+). In terms of processing, the precursor is cleaved by a furin endopeptidase. Post-translationally, glycosylated. Can be O-fucosylated by POFUT2 on a serine or a threonine residue found within the consensus sequence C1-X(2)-(S/T)-C2-G of the TSP type-1 repeat domains where C1 and C2 are the first and second cysteine residue of the repeat, respectively. Fucosylated repeats can then be further glycosylated by the addition of a beta-1,3-glucose residue by the glucosyltransferase, B3GALTL. Fucosylation mediates the efficient secretion of ADAMTS family members. Can also be C-glycosylated with one or two mannose molecules on tryptophan residues within the consensus sequence W-X-X-W of the TPRs, and N-glycosylated. These other glycosylations can also facilitate secretion.

The protein resides in the secreted. It is found in the extracellular space. The protein localises to the extracellular matrix. Its function is as follows. Metalloprotease which cleaves aggrecan, a cartilage proteoglycan, at the '1683-Glu-|-Leu-1684' site (within the chondroitin sulfate attachment domain), and may be involved in its turnover. Also cleaves COMP. Has angiogenic inhibitor activity. May play a critical role in follicular rupture. This Rattus norvegicus (Rat) protein is A disintegrin and metalloproteinase with thrombospondin motifs 1 (Adamts1).